Consider the following 216-residue polypeptide: Probable nicotinate-nucleotide adenylyltransferase (216 aa).

This sequence belongs to the NadD family.

The catalysed reaction is nicotinate beta-D-ribonucleotide + ATP + H(+) = deamido-NAD(+) + diphosphate. Its pathway is cofactor biosynthesis; NAD(+) biosynthesis; deamido-NAD(+) from nicotinate D-ribonucleotide: step 1/1. Catalyzes the reversible adenylation of nicotinate mononucleotide (NaMN) to nicotinic acid adenine dinucleotide (NaAD). The polypeptide is Probable nicotinate-nucleotide adenylyltransferase (Shewanella baltica (strain OS185)).